The primary structure comprises 60 residues: MAKHPVPKKKTSKSKRDMRRSHHALVAPNLTECPQCHSKKLQHHICPSCGYYNGRQVLAV.

Positions 1-23 are enriched in basic residues; the sequence is MAKHPVPKKKTSKSKRDMRRSHH. Positions 1–26 are disordered; it reads MAKHPVPKKKTSKSKRDMRRSHHALV.

This sequence belongs to the bacterial ribosomal protein bL32 family.

The chain is Large ribosomal subunit protein bL32 from Deinococcus geothermalis (strain DSM 11300 / CIP 105573 / AG-3a).